The following is a 375-amino-acid chain: MAKADFYETLGVAKSADEKELKSAFRKLAMKYHPDKNPDDKEAERKFKEINEAYEMLKDPQKRAAYDRYGHAAFEHGGMGGGGGGFAGGGFSDIFEDIFGEMMGGGRGRQRSAGGRERGADLRYNMEITLEEAFSGKTAQIRVPTSITCDVCSGSGAKPGTQPKNCGTCQGTGRVRAAQGFFSIERTCPTCHGRGQIIPDPCPKCHGQGRVTEERSLSVNIPAGIEDGTRIRLQGEGEAGTRGGPAGDLYIFLSVKPHEFYQRDGADLYCAVPISMTTAALGGTFDVATLDGTKSRVSVPEGTQAGKQFRLKGKGMPVLRSAQTGDLYIQIQIETPQKLTKRQRELLQEFEQISSKENNPESTGFFARMKEFFEG.

The J domain maps to aspartate 5 to glycine 70. The CR-type zinc-finger motif lies at glycine 136–glutamate 214. The Zn(2+) site is built by cysteine 149, cysteine 152, cysteine 166, cysteine 169, cysteine 188, cysteine 191, cysteine 202, and cysteine 205. 4 CXXCXGXG motif repeats span residues cysteine 149–glycine 156, cysteine 166–glycine 173, cysteine 188–glycine 195, and cysteine 202–glycine 209.

It belongs to the DnaJ family. In terms of assembly, homodimer. Requires Zn(2+) as cofactor.

The protein resides in the cytoplasm. Participates actively in the response to hyperosmotic and heat shock by preventing the aggregation of stress-denatured proteins and by disaggregating proteins, also in an autonomous, DnaK-independent fashion. Unfolded proteins bind initially to DnaJ; upon interaction with the DnaJ-bound protein, DnaK hydrolyzes its bound ATP, resulting in the formation of a stable complex. GrpE releases ADP from DnaK; ATP binding to DnaK triggers the release of the substrate protein, thus completing the reaction cycle. Several rounds of ATP-dependent interactions between DnaJ, DnaK and GrpE are required for fully efficient folding. Also involved, together with DnaK and GrpE, in the DNA replication of plasmids through activation of initiation proteins. The sequence is that of Chaperone protein DnaJ from Rhizobium etli (strain ATCC 51251 / DSM 11541 / JCM 21823 / NBRC 15573 / CFN 42).